Reading from the N-terminus, the 308-residue chain is 50 kDa gamma-zein (308 aa).

Positions 1 to 19 (MKLVLVVLAFIALVSSVSC) are cleaved as a signal peptide. Residues 27–159 (CGQQQSHEQQ…QPQQPQQYQQ (133 aa)) form a disordered region. Over residues 55-119 (HHQQQQHQQQ…QHHQQSQGHV (65 aa)) the composition is skewed to low complexity. Basic and acidic residues predominate over residues 120–129 (QQHEQSHEQH). A compositionally biased stretch (low complexity) spans 130-159 (QGQSHEQQHQQQFQGHDKQQQPQQPQQYQQ). A lipid anchor (GPI-anchor amidated cysteine) is attached at Cys286. Residues 287–308 (GLYHSYYQNNPCSSNDISGVCN) constitute a propeptide, removed in mature form.

Belongs to the gliadin/glutenin family. Interacts with OP10 (via N-terminus).

The protein resides in the cell membrane. Functionally, zeins are major seed storage proteins. The sequence is that of 50 kDa gamma-zein from Zea mays (Maize).